The chain runs to 254 residues: Coproheme decarboxylase (254 aa).

Fe-coproporphyrin III-binding positions include Arg136, 150–154, His177, Gln190, and Ser228; that span reads YPMDK. The active site involves Tyr150.

Belongs to the ChdC family. Type 1 subfamily. The cofactor is Fe-coproporphyrin III.

The catalysed reaction is Fe-coproporphyrin III + 2 H2O2 + 2 H(+) = heme b + 2 CO2 + 4 H2O. It catalyses the reaction Fe-coproporphyrin III + H2O2 + H(+) = harderoheme III + CO2 + 2 H2O. The enzyme catalyses harderoheme III + H2O2 + H(+) = heme b + CO2 + 2 H2O. It participates in porphyrin-containing compound metabolism; protoheme biosynthesis. Its function is as follows. Involved in coproporphyrin-dependent heme b biosynthesis. Catalyzes the decarboxylation of Fe-coproporphyrin III (coproheme) to heme b (protoheme IX), the last step of the pathway. The reaction occurs in a stepwise manner with a three-propionate intermediate. This Bacillus licheniformis (strain ATCC 14580 / DSM 13 / JCM 2505 / CCUG 7422 / NBRC 12200 / NCIMB 9375 / NCTC 10341 / NRRL NRS-1264 / Gibson 46) protein is Coproheme decarboxylase.